The primary structure comprises 374 residues: Ribosomal RNA large subunit methyltransferase G (374 aa).

It belongs to the methyltransferase superfamily. RlmG family.

The protein resides in the cytoplasm. The catalysed reaction is guanosine(1835) in 23S rRNA + S-adenosyl-L-methionine = N(2)-methylguanosine(1835) in 23S rRNA + S-adenosyl-L-homocysteine + H(+). Specifically methylates the guanine in position 1835 (m2G1835) of 23S rRNA. This Pseudomonas aeruginosa (strain ATCC 15692 / DSM 22644 / CIP 104116 / JCM 14847 / LMG 12228 / 1C / PRS 101 / PAO1) protein is Ribosomal RNA large subunit methyltransferase G.